Consider the following 257-residue polypeptide: General L-amino acid transport ATP-binding protein AapP (257 aa).

The 235-residue stretch at 18 to 252 (VEIVNMNKWY…PQHERTKLFL (235 aa)) folds into the ABC transporter domain. Position 50–57 (50–57 (GPSGSGKS)) interacts with ATP.

Belongs to the ABC transporter superfamily.

In terms of biological role, part of a binding-protein-dependent transport system for L-amino acids, affects the uptake as well as the efflux of these amino acids. Probably responsible for energy coupling to the transport system. In Rhizobium johnstonii (strain DSM 114642 / LMG 32736 / 3841) (Rhizobium leguminosarum bv. viciae), this protein is General L-amino acid transport ATP-binding protein AapP (aapP).